Here is a 267-residue protein sequence, read N- to C-terminus: Hydroxyethylthiazole kinase (267 aa).

Met46 provides a ligand contact to substrate. ATP contacts are provided by Arg122 and Thr168. Substrate is bound at residue Gly195.

Belongs to the Thz kinase family. The cofactor is Mg(2+).

It catalyses the reaction 5-(2-hydroxyethyl)-4-methylthiazole + ATP = 4-methyl-5-(2-phosphooxyethyl)-thiazole + ADP + H(+). It participates in cofactor biosynthesis; thiamine diphosphate biosynthesis; 4-methyl-5-(2-phosphoethyl)-thiazole from 5-(2-hydroxyethyl)-4-methylthiazole: step 1/1. Its function is as follows. Catalyzes the phosphorylation of the hydroxyl group of 4-methyl-5-beta-hydroxyethylthiazole (THZ). This chain is Hydroxyethylthiazole kinase, found in Moorella thermoacetica (strain ATCC 39073 / JCM 9320).